The chain runs to 161 residues: Serine-protein kinase RsbW (161 aa).

This sequence belongs to the anti-sigma-factor family.

The enzyme catalyses L-seryl-[protein] + ATP = O-phospho-L-seryl-[protein] + ADP + H(+). It catalyses the reaction L-threonyl-[protein] + ATP = O-phospho-L-threonyl-[protein] + ADP + H(+). In terms of biological role, negative regulator of sigma-B activity. Phosphorylates and inactivates its specific antagonist protein, RsbV. Upon phosphorylation of RsbV, RsbW is released and binds to sigma-B, thereby blocking its ability to form an RNA polymerase holoenzyme (E-sigma-B). In Bacillus licheniformis (strain ATCC 14580 / DSM 13 / JCM 2505 / CCUG 7422 / NBRC 12200 / NCIMB 9375 / NCTC 10341 / NRRL NRS-1264 / Gibson 46), this protein is Serine-protein kinase RsbW.